A 294-amino-acid polypeptide reads, in one-letter code: 4-hydroxybenzoate octaprenyltransferase (294 aa).

8 consecutive transmembrane segments (helical) span residues 20–42 (LLRI…ALWL), 98–118 (WEAV…VVLF), 120–140 (NTLT…YPFM), 145–165 (HLPQ…AWAA), 175–195 (WLLF…YAMV), 218–238 (AIIA…GQRA), 242–262 (SFYY…QYLA), and 274–294 (FLNN…DLAF).

This sequence belongs to the UbiA prenyltransferase family. Mg(2+) serves as cofactor.

It is found in the cell inner membrane. It catalyses the reaction all-trans-octaprenyl diphosphate + 4-hydroxybenzoate = 4-hydroxy-3-(all-trans-octaprenyl)benzoate + diphosphate. The protein operates within cofactor biosynthesis; ubiquinone biosynthesis. Its function is as follows. Catalyzes the prenylation of para-hydroxybenzoate (PHB) with an all-trans polyprenyl group. Mediates the second step in the final reaction sequence of ubiquinone-8 (UQ-8) biosynthesis, which is the condensation of the polyisoprenoid side chain with PHB, generating the first membrane-bound Q intermediate 3-octaprenyl-4-hydroxybenzoate. This is 4-hydroxybenzoate octaprenyltransferase from Marinobacter nauticus (strain ATCC 700491 / DSM 11845 / VT8) (Marinobacter aquaeolei).